Consider the following 450-residue polypeptide: L-lysine-epsilon aminotransferase (450 aa).

Residues glycine 127 and alanine 128 each contribute to the pyridoxal 5'-phosphate site. 2-oxoglutarate-binding residues include arginine 168 and glutamine 274. Arginine 168 contributes to the L-lysine binding site. Glutamine 274 lines the pyridoxal 5'-phosphate pocket. Residue lysine 300 is modified to N6-(pyridoxal phosphate)lysine. Arginine 423 contacts 2-oxoglutarate.

Belongs to the class-III pyridoxal-phosphate-dependent aminotransferase family. Pyridoxal 5'-phosphate is required as a cofactor.

The catalysed reaction is L-lysine + 2-oxoglutarate = (S)-2-amino-6-oxohexanoate + L-glutamate. Its pathway is antibiotic biosynthesis; cephamycin C biosynthesis. Functionally, catalyzes the transfer of the terminal amino group of L-lysine to alpha-ketoglutarate to yield L-glutamate and 2-aminoadipate 6-semialdehyde ((S)-2-amino-6-oxohexanoate), which is spontaneously converted to the dehydrated form 1-piperideine 6-carboxylate. The sequence is that of L-lysine-epsilon aminotransferase from Amycolatopsis lactamdurans (Nocardia lactamdurans).